We begin with the raw amino-acid sequence, 284 residues long: Bifunctional protein FolD (284 aa).

NADP(+) contacts are provided by residues 166 to 168 (GAS) and I232.

It belongs to the tetrahydrofolate dehydrogenase/cyclohydrolase family. In terms of assembly, homodimer.

The enzyme catalyses (6R)-5,10-methylene-5,6,7,8-tetrahydrofolate + NADP(+) = (6R)-5,10-methenyltetrahydrofolate + NADPH. It catalyses the reaction (6R)-5,10-methenyltetrahydrofolate + H2O = (6R)-10-formyltetrahydrofolate + H(+). It functions in the pathway one-carbon metabolism; tetrahydrofolate interconversion. Catalyzes the oxidation of 5,10-methylenetetrahydrofolate to 5,10-methenyltetrahydrofolate and then the hydrolysis of 5,10-methenyltetrahydrofolate to 10-formyltetrahydrofolate. The polypeptide is Bifunctional protein FolD (Shewanella oneidensis (strain ATCC 700550 / JCM 31522 / CIP 106686 / LMG 19005 / NCIMB 14063 / MR-1)).